The primary structure comprises 161 residues: Globin CTT-VIIB-5/CTT-VIIB-9 (161 aa).

The signal sequence occupies residues 1–16 (MKFFAVLALCIVGAIA). Residues 18 to 161 (PLTADEASLV…NTFAIVVPRL (144 aa)) form the Globin domain. 2 residues coordinate heme b: histidine 76 and histidine 111.

Belongs to the globin family. Homodimer.

The chain is Globin CTT-VIIB-5/CTT-VIIB-9 (CTT-7B5) from Chironomus thummi thummi (Midge).